Consider the following 388-residue polypeptide: 1-deoxy-D-xylulose 5-phosphate reductoisomerase (388 aa).

NADPH contacts are provided by T15, G16, S17, I18, and N127. K128 provides a ligand contact to 1-deoxy-D-xylulose 5-phosphate. NADPH is bound at residue E129. Residue D153 coordinates Mn(2+). S154, E155, S179, and H202 together coordinate 1-deoxy-D-xylulose 5-phosphate. E155 provides a ligand contact to Mn(2+). G208 contributes to the NADPH binding site. 1-deoxy-D-xylulose 5-phosphate-binding residues include S215, N220, K221, and E224. E224 contacts Mn(2+).

It belongs to the DXR family. Mg(2+) serves as cofactor. The cofactor is Mn(2+).

It catalyses the reaction 2-C-methyl-D-erythritol 4-phosphate + NADP(+) = 1-deoxy-D-xylulose 5-phosphate + NADPH + H(+). The protein operates within isoprenoid biosynthesis; isopentenyl diphosphate biosynthesis via DXP pathway; isopentenyl diphosphate from 1-deoxy-D-xylulose 5-phosphate: step 1/6. Catalyzes the NADPH-dependent rearrangement and reduction of 1-deoxy-D-xylulose-5-phosphate (DXP) to 2-C-methyl-D-erythritol 4-phosphate (MEP). This Bacteroides fragilis (strain YCH46) protein is 1-deoxy-D-xylulose 5-phosphate reductoisomerase.